Here is a 136-residue protein sequence, read N- to C-terminus: Large ribosomal subunit protein uL16 (136 aa).

The protein belongs to the universal ribosomal protein uL16 family. In terms of assembly, part of the 50S ribosomal subunit.

Functionally, binds 23S rRNA and is also seen to make contacts with the A and possibly P site tRNAs. The sequence is that of Large ribosomal subunit protein uL16 from Wigglesworthia glossinidia brevipalpis.